A 149-amino-acid chain; its full sequence is Transcriptional repressor NrdR (149 aa).

Residues 3-34 fold into a zinc finger; that stretch reads CPFCSENDTKVIDSRLVADGHQVRRRRQCLAC. One can recognise an ATP-cone domain in the interval 49–139; that stretch reads PKVIKSNGNR…VYRSFEDIRE (91 aa).

This sequence belongs to the NrdR family. Zn(2+) is required as a cofactor.

Negatively regulates transcription of bacterial ribonucleotide reductase nrd genes and operons by binding to NrdR-boxes. The protein is Transcriptional repressor NrdR of Vibrio parahaemolyticus serotype O3:K6 (strain RIMD 2210633).